We begin with the raw amino-acid sequence, 926 residues long: Ubiquitin carboxyl-terminal hydrolase 4 (926 aa).

Positions 205–328 (SQMEILLIDI…WLKSNYGSQV (124 aa)) constitute a Rhodanese domain. The residue at position 443 (Ser-443) is a Phosphoserine. The USP domain occupies 562-923 (VGLENLGNSC…NAYVLFYHRV (362 aa)). The active-site Nucleophile is the Cys-571. His-880 serves as the catalytic Proton acceptor.

This sequence belongs to the peptidase C19 family. In terms of assembly, interacts with BRO1, RFU1 and VPS32. Associates with the 26S proteasome.

It localises to the cytoplasm. It is found in the late endosome membrane. The enzyme catalyses Thiol-dependent hydrolysis of ester, thioester, amide, peptide and isopeptide bonds formed by the C-terminal Gly of ubiquitin (a 76-residue protein attached to proteins as an intracellular targeting signal).. RFU1 is an inhibitor of deubiquitination activity. Its function is as follows. Ubiquitin thioesterase that acts at the late endosome/prevacuolar compartment to recover ubiquitin from ubiquitinated membrane proteins en route to the vacuole. Also removes ubiquitin from soluble proteins targeted to proteasomes. Is essential to maintain a normal level of free ubiquitin. Involved in the ammonium-induced down-regulation of the GAP1 permease and the UME3 destruction in response to oxidative stress. Has a role in the RAD9 checkpoint response to TOP1 poisons. Required for promoting coordination of DNA replication and avoids DNA overreplication. This chain is Ubiquitin carboxyl-terminal hydrolase 4 (DOA4), found in Saccharomyces cerevisiae (strain YJM789) (Baker's yeast).